We begin with the raw amino-acid sequence, 294 residues long: 4-hydroxy-tetrahydrodipicolinate synthase (294 aa).

Thr44 lines the pyruvate pocket. Tyr132 serves as the catalytic Proton donor/acceptor. Catalysis depends on Lys160, which acts as the Schiff-base intermediate with substrate. Residue Val202 coordinates pyruvate.

The protein belongs to the DapA family. In terms of assembly, homotetramer; dimer of dimers.

It is found in the cytoplasm. The enzyme catalyses L-aspartate 4-semialdehyde + pyruvate = (2S,4S)-4-hydroxy-2,3,4,5-tetrahydrodipicolinate + H2O + H(+). It participates in amino-acid biosynthesis; L-lysine biosynthesis via DAP pathway; (S)-tetrahydrodipicolinate from L-aspartate: step 3/4. Functionally, catalyzes the condensation of (S)-aspartate-beta-semialdehyde [(S)-ASA] and pyruvate to 4-hydroxy-tetrahydrodipicolinate (HTPA). This Leptospira borgpetersenii serovar Hardjo-bovis (strain JB197) protein is 4-hydroxy-tetrahydrodipicolinate synthase.